Consider the following 1072-residue polypeptide: DNA-directed RNA polymerase subunit beta (1072 aa).

This sequence belongs to the RNA polymerase beta chain family. In plastids the minimal PEP RNA polymerase catalytic core is composed of four subunits: alpha, beta, beta', and beta''. When a (nuclear-encoded) sigma factor is associated with the core the holoenzyme is formed, which can initiate transcription.

It localises to the plastid. The protein resides in the chloroplast. It catalyses the reaction RNA(n) + a ribonucleoside 5'-triphosphate = RNA(n+1) + diphosphate. Its function is as follows. DNA-dependent RNA polymerase catalyzes the transcription of DNA into RNA using the four ribonucleoside triphosphates as substrates. The chain is DNA-directed RNA polymerase subunit beta from Crucihimalaya wallichii (Rock-cress).